Consider the following 587-residue polypeptide: Protein IQ-DOMAIN 31 (587 aa).

Positions 57–80 are disordered; that stretch reads ETNTVDRSGGMLETQNVGPEEISD. Ser-79 carries the phosphoserine modification. 3 consecutive IQ domains span residues 112–140, 141–163, and 164–188; these read REIA…GIIR, LQAL…SVMG, and IVRL…VYRK. Residues 149 to 159 are calmodulin-binding; sequence LVRRQAVATLF. The short motif at 176–183 is the Nuclear localization signal element; that stretch reads IRKSDIGV. Positions 344–587 are disordered; it reads NPVVESSIQP…AKTTPAERKR (244 aa). Basic and acidic residues-rich tracts occupy residues 357–373 and 390–413; these read PRKE…KTRE and CDEK…EMEV. Polar residues predominate over residues 424-434; that stretch reads ALDSSLVNQID. Basic and acidic residues-rich tracts occupy residues 435 to 472 and 482 to 494; these read SNEK…ENQK and KTER…HHET. Polar residues-rich tracts occupy residues 495–506 and 544–561; these read SPSIPSYMQATK and RITS…SGDK.

It belongs to the IQD family. As to quaternary structure, binds to multiple calmodulin (CaM) in the presence of Ca(2+) and CaM-like proteins.

The protein localises to the nucleus. Its subcellular location is the nucleus envelope. It localises to the cytoplasm. The protein resides in the cytoskeleton. It is found in the cell membrane. In terms of biological role, may be involved in cooperative interactions with calmodulins or calmodulin-like proteins. Recruits calmodulin proteins to microtubules, thus being a potential scaffold in cellular signaling and trafficking. May associate with nucleic acids and regulate gene expression at the transcriptional or post-transcriptional level. The protein is Protein IQ-DOMAIN 31 of Arabidopsis thaliana (Mouse-ear cress).